A 170-amino-acid chain; its full sequence is Double homeobox protein 1 (170 aa).

2 consecutive DNA-binding regions (homeobox) follow at residues 19–78 and 94–153; these read GRRM…LRQH and GRRK…RGQS. Residues 75-100 form a disordered region; that stretch reads LRQHRRQSRPWPGRRDPQKGRRKRTA.

It belongs to the paired homeobox family. In terms of tissue distribution, expressed in rhabdomyosarcoma TE671 cells as well as in several other normal and cancer cells.

It localises to the nucleus. Functionally, probable transcription activator. Binds the P5 DNA element sequence 5'-GATCTGAGTCTAATTGAGAATTACTGTAC-3'. In Homo sapiens (Human), this protein is Double homeobox protein 1 (DUX1).